Consider the following 140-residue polypeptide: MQHRSFFLLALVALLAVTTAVAKKKDKVKKGSECSEWTWGPCTPSSKDCGMGFREGTCGAQTQRIHCKVPCNWKKEFGADCKYKFESWGACDGSTGTKARQGTLKKARYNAQCQETIRVTKPCTSKTKSKAKAKKGKGKD.

Positions 1-20 (MQHRSFFLLALVALLAVTTA) are cleaved as a signal peptide. 5 disulfide bridges follow: Cys34/Cys58, Cys42/Cys67, Cys49/Cys71, Cys81/Cys113, and Cys91/Cys123.

This sequence belongs to the pleiotrophin family. As to quaternary structure, homodimer. Interacts with ALK. Interacts with LRP1; promotes neuronal survival. Interacts with LRP2. Interacts with NCAM1. Interacts (via C-terminal) with PTPRZ1 (via chondroitin sulfate chains); this interaction is inhibited by PTN; this interaction promotes neuronal migration. Interacts with NCL; this interaction promotes NCL clustering and lateral movements of this complex into lipid rafts leading to MDK internalization. Interacts with LRP6 and LRP8: this interaction is calcium dependent. Interacts with ITGA4. Interacts with ITGA6. Interacts with ITGB1. Interacts with ITGA4:ITGB1 complex; this interaction mediates MDK-induced osteoblast cells migration through PXN phosphorylation. Interacts with ITGA6:ITGB1 complex; this interaction mediates MDK-induced neurite outgrowth. Interacts with NOTCH2; this interactio mediates a nuclear accumulation of NOTCH2 and therefore activation of NOTCH2 signaling leading to interaction between HES1 and STAT3. Interacts with GPC2 (via heparan sulfate chain); this interaction is inhibited by heparin followed by chondroitin sulfate E; this interaction induces GPC2 clustering through heparan sulfate chain; this interaction induces neuronal cell adhesion and neurite outgrowth. Interacts with SDC3; this interaction induces SDC3 clustering; this interaction induces neuronal cell adhesion and neurite outgrowth. Interacts with SDC1. Interacts with CSPG5; this interaction promotes elongation of oligodendroglial precursor-like cells. In terms of tissue distribution, expressed at a low level in arteries, and at higher levels in newly formed neointima. In brain, expressed in the caudate nucleus and the brain stem.

It localises to the secreted. Developmentally regulated, secreted growth factor homologous to pleiotrophin (PTN), which has heparin binding activity. Binds anaplastic lymphoma kinase (ALK) which induces ALK activation and subsequent phosphorylation of the insulin receptor substrate (IRS1), followed by the activation of mitogen-activated protein kinase (MAPK) and PI3-kinase, and the induction of cell proliferation. Involved in neointima formation after arterial injury, possibly by mediating leukocyte recruitment. Also involved in early fetal adrenal gland development. In terms of biological role, secreted protein that functions as a cytokine and growth factor and mediates its signal through cell-surface proteoglycan and non-proteoglycan receptors. Binds cell-surface proteoglycan receptors via their chondroitin sulfate (CS) groups. Thereby regulates many processes like inflammatory response, cell proliferation, cell adhesion, cell growth, cell survival, tissue regeneration, cell differentiation and cell migration. Participates in inflammatory processes by exerting two different activities. Firstly, mediates neutrophils and macrophages recruitment to the sites of inflammation both by direct action by cooperating namely with ITGB2 via LRP1 and by inducing chemokine expression. This inflammation can be accompanied by epithelial cell survival and smooth muscle cell migration after renal and vessel damage, respectively. Secondly, suppresses the development of tolerogenic dendric cells thereby inhibiting the differentiation of regulatory T cells and also promote T cell expansion through NFAT signaling and Th1 cell differentiation. Promotes tissue regeneration after injury or trauma. After heart damage negatively regulates the recruitment of inflammatory cells and mediates cell survival through activation of anti-apoptotic signaling pathways via MAPKs and AKT pathways through the activation of angiogenesis. Also facilitates liver regeneration as well as bone repair by recruiting macrophage at trauma site and by promoting cartilage development by facilitating chondrocyte differentiation. Plays a role in brain by promoting neural precursor cells survival and growth through interaction with heparan sulfate proteoglycans. Binds PTPRZ1 and promotes neuronal migration and embryonic neurons survival. Binds SDC3 or GPC2 and mediates neurite outgrowth and cell adhesion. Binds chondroitin sulfate E and heparin leading to inhibition of neuronal cell adhesion induced by binding with GPC2. Binds CSPG5 and promotes elongation of oligodendroglial precursor-like cells. Also binds ITGA6:ITGB1 complex; this interaction mediates MDK-induced neurite outgrowth. Binds LRP1; promotes neuronal survival. Binds ITGA4:ITGB1 complex; this interaction mediates MDK-induced osteoblast cells migration through PXN phosphorylation. Binds anaplastic lymphoma kinase (ALK) which induces ALK activation and subsequent phosphorylation of the insulin receptor substrate (IRS1), followed by the activation of mitogen-activated protein kinase (MAPK) and PI3-kinase, and the induction of cell proliferation. Promotes epithelial to mesenchymal transition through interaction with NOTCH2. During arteriogenesis, plays a role in vascular endothelial cell proliferation by inducing VEGFA expression and release which in turn induces nitric oxide synthase expression. Moreover activates vasodilation through nitric oxide synthase activation. Negatively regulates bone formation in response to mechanical load by inhibiting Wnt/beta-catenin signaling in osteoblasts. In addition plays a role in hippocampal development, working memory, auditory response, early fetal adrenal gland development and the female reproductive system. The chain is Midkine from Rattus norvegicus (Rat).